The following is a 345-amino-acid chain: Fructose-1,6-bisphosphatase class 1 (345 aa).

Mg(2+)-binding residues include Glu-90, Asp-109, Leu-111, and Asp-112. Residues 112 to 115 and Asn-200 each bind substrate; that span reads DGSS. Glu-272 contacts Mg(2+).

It belongs to the FBPase class 1 family. In terms of assembly, homotetramer. The cofactor is Mg(2+).

The protein resides in the cytoplasm. It catalyses the reaction beta-D-fructose 1,6-bisphosphate + H2O = beta-D-fructose 6-phosphate + phosphate. It participates in carbohydrate biosynthesis; gluconeogenesis. This chain is Fructose-1,6-bisphosphatase class 1, found in Bradyrhizobium diazoefficiens (strain JCM 10833 / BCRC 13528 / IAM 13628 / NBRC 14792 / USDA 110).